The sequence spans 340 residues: MNIREAIAAVVARRDLTQAEAASVMEEIMNGTATPAQIAAFLTALHIKGETDAEIAGMAAVMREKATHVYFDGPVIDTCGTGGDGAHTFNISTTAAFVAAGAGLTVAKHGNRAMSSVCGSADVLEGLGVQIELDAEGVARCLRDAGIGFMFAPKFHPAMRFAGPVRREIGIRTVFNILGPLTNPARARYQVLGVASAALAEKLANALSRLDTVHALVVHGDGGVDELTLSGPNLIFEVRAGHALRQMIVAPEDVGLERAPREALRGGDVAYNVALVRAILSGEDRGPRRDVVLLNAAAALVAGDVAPDLATGVKMARASIDSGRALERLHRMIAVSRGEA.

5-phospho-alpha-D-ribose 1-diphosphate contacts are provided by residues Gly-80, 83–84, Thr-88, 90–93, 108–116, and Ser-120; these read GD, NIST, and KHGNRAMSS. Residue Gly-80 coordinates anthranilate. Ser-92 contributes to the Mg(2+) binding site. Anthranilate is bound at residue Asn-111. Anthranilate is bound at residue Arg-166. The Mg(2+) site is built by Asp-225 and Glu-226.

The protein belongs to the anthranilate phosphoribosyltransferase family. Homodimer. Requires Mg(2+) as cofactor.

The catalysed reaction is N-(5-phospho-beta-D-ribosyl)anthranilate + diphosphate = 5-phospho-alpha-D-ribose 1-diphosphate + anthranilate. The protein operates within amino-acid biosynthesis; L-tryptophan biosynthesis; L-tryptophan from chorismate: step 2/5. Functionally, catalyzes the transfer of the phosphoribosyl group of 5-phosphorylribose-1-pyrophosphate (PRPP) to anthranilate to yield N-(5'-phosphoribosyl)-anthranilate (PRA). The chain is Anthranilate phosphoribosyltransferase from Chloroflexus aggregans (strain MD-66 / DSM 9485).